Reading from the N-terminus, the 84-residue chain is Small ribosomal subunit protein bS16 (84 aa).

Belongs to the bacterial ribosomal protein bS16 family.

The polypeptide is Small ribosomal subunit protein bS16 (Koribacter versatilis (strain Ellin345)).